Consider the following 519-residue polypeptide: Protein nucleotidyltransferase YdiU (519 aa).

8 residues coordinate ATP: Gly101, Gly103, Arg104, Lys124, Asp136, Gly137, Arg194, and Arg201. Catalysis depends on Asp271, which acts as the Proton acceptor. Residues Asn272 and Asp281 each coordinate Mg(2+). ATP is bound at residue Asp281.

Belongs to the SELO family. The cofactor is Mg(2+). Requires Mn(2+) as cofactor.

The catalysed reaction is L-seryl-[protein] + ATP = 3-O-(5'-adenylyl)-L-seryl-[protein] + diphosphate. It catalyses the reaction L-threonyl-[protein] + ATP = 3-O-(5'-adenylyl)-L-threonyl-[protein] + diphosphate. The enzyme catalyses L-tyrosyl-[protein] + ATP = O-(5'-adenylyl)-L-tyrosyl-[protein] + diphosphate. It carries out the reaction L-histidyl-[protein] + UTP = N(tele)-(5'-uridylyl)-L-histidyl-[protein] + diphosphate. The catalysed reaction is L-seryl-[protein] + UTP = O-(5'-uridylyl)-L-seryl-[protein] + diphosphate. It catalyses the reaction L-tyrosyl-[protein] + UTP = O-(5'-uridylyl)-L-tyrosyl-[protein] + diphosphate. Functionally, nucleotidyltransferase involved in the post-translational modification of proteins. It can catalyze the addition of adenosine monophosphate (AMP) or uridine monophosphate (UMP) to a protein, resulting in modifications known as AMPylation and UMPylation. The protein is Protein nucleotidyltransferase YdiU of Azoarcus sp. (strain BH72).